A 1827-amino-acid chain; its full sequence is Sucrase-isomaltase, intestinal (1827 aa).

Over 2–12 the chain is Cytoplasmic; it reads ARKKFSGLEIS. Residue serine 7 is modified to Phosphoserine; by PKA. The helical; Signal-anchor for type II membrane protein transmembrane segment at 13–32 threads the bilayer; that stretch reads LIVLFVIVTIIAIALIVVLA. The Lumenal segment spans residues 33 to 1827; the sequence is TKTPAVDEIS…LEEPIEINWS (1795 aa). The tract at residues 40–61 is disordered; it reads EISDSTSTPATTRVTTNPSDSG. The span at 45-55 shows a compositional bias: low complexity; the sequence is TSTPATTRVTT. Residues 61 to 110 enclose the P-type 1 domain; the sequence is GKCPNVLNDPVNVRINCIPEQFPTEGICAQRGCCWRPWNDSLIPWCFFVD. Intrachain disulfides connect cysteine 63/cysteine 94, cysteine 77/cysteine 93, and cysteine 88/cysteine 106. Residue asparagine 99 is glycosylated (N-linked (GlcNAc...) asparagine). The tract at residues 110-1007 is isomaltase; the sequence is DNHGYNVQDM…DLQLNTANAR (898 aa). Sulfotyrosine occurs at positions 237 and 239. Substrate contacts are provided by aspartate 264 and aspartate 388. Sulfotyrosine is present on residues tyrosine 391 and tyrosine 400. Asparagine 437 and asparagine 455 each carry an N-linked (GlcNAc...) asparagine glycan. The active-site Nucleophile; for isomaltase activity is the aspartate 505. Cysteine 520 and cysteine 545 are disulfide-bonded. Arginine 588 serves as a coordination point for substrate. Catalysis depends on aspartate 604, which acts as the For isomaltase activity. Cysteine 635 and cysteine 646 are oxidised to a cystine. Histidine 662 is a binding site for substrate. Residues tyrosine 667, tyrosine 763, and tyrosine 765 each carry the sulfotyrosine modification. N-linked (GlcNAc...) asparagine glycans are attached at residues asparagine 823, asparagine 855, asparagine 904, and asparagine 926. The P-type 2 domain maps to 932 to 978; the sequence is NQIFSENERFNCYPDADLATEQKCTQRGCVWRTGSSLSKAPECYFPR. The interval 1008 to 1827 is sucrase; sequence IKLPSDPIST…LEEPIEINWS (820 aa). Residues asparagine 1235, asparagine 1303, asparagine 1340, and asparagine 1354 are each glycosylated (N-linked (GlcNAc...) asparagine). Aspartate 1394 serves as the catalytic Nucleophile; for sucrase activity. Glutamate 1397 functions as the For sucrase activity in the catalytic mechanism. Asparagine 1403 carries an N-linked (GlcNAc...) asparagine glycan. Aspartate 1500 serves as the catalytic Proton donor; for isomaltase activity. 6 N-linked (GlcNAc...) asparagine glycosylation sites follow: asparagine 1535, asparagine 1572, asparagine 1675, asparagine 1748, asparagine 1763, and asparagine 1815.

Belongs to the glycosyl hydrolase 31 family. The resulting sucrase and isomaltase subunits stay associated with one another in a complex by non-covalent linkages. In terms of processing, the precursor is proteolytically cleaved when exposed to pancreatic proteases in the intestinal lumen. Sulfated. In terms of tissue distribution, expressed in the poorly differentiated crypt cells of the small intestine as well as in the mature villous cells. Expressed at very low levels in the colon.

It is found in the apical cell membrane. The enzyme catalyses Hydrolysis of sucrose and maltose by an alpha-D-glucosidase-type action.. It carries out the reaction Hydrolysis of (1-&gt;6)-alpha-D-glucosidic linkages in some oligosaccharides produced from starch and glycogen by alpha-amylase, and in isomaltose.. In terms of biological role, plays an important role in the final stage of carbohydrate digestion. Isomaltase activity is specific for both alpha-1,4- and alpha-1,6-oligosaccharides. The protein is Sucrase-isomaltase, intestinal (SI) of Homo sapiens (Human).